A 160-amino-acid chain; its full sequence is Ribosomal RNA large subunit methyltransferase H (160 aa).

Residues Leu78, Gly109, and 128–133 (LSNLTL) contribute to the S-adenosyl-L-methionine site.

Belongs to the RNA methyltransferase RlmH family. In terms of assembly, homodimer.

The protein localises to the cytoplasm. It carries out the reaction pseudouridine(1915) in 23S rRNA + S-adenosyl-L-methionine = N(3)-methylpseudouridine(1915) in 23S rRNA + S-adenosyl-L-homocysteine + H(+). In terms of biological role, specifically methylates the pseudouridine at position 1915 (m3Psi1915) in 23S rRNA. The polypeptide is Ribosomal RNA large subunit methyltransferase H (Alcanivorax borkumensis (strain ATCC 700651 / DSM 11573 / NCIMB 13689 / SK2)).